The chain runs to 177 residues: Peptide methionine sulfoxide reductase MsrA (177 aa).

Cysteine 10 is a catalytic residue.

It belongs to the MsrA Met sulfoxide reductase family.

It catalyses the reaction L-methionyl-[protein] + [thioredoxin]-disulfide + H2O = L-methionyl-(S)-S-oxide-[protein] + [thioredoxin]-dithiol. It carries out the reaction [thioredoxin]-disulfide + L-methionine + H2O = L-methionine (S)-S-oxide + [thioredoxin]-dithiol. In terms of biological role, has an important function as a repair enzyme for proteins that have been inactivated by oxidation. Catalyzes the reversible oxidation-reduction of methionine sulfoxide in proteins to methionine. In Saccharolobus solfataricus (strain ATCC 35092 / DSM 1617 / JCM 11322 / P2) (Sulfolobus solfataricus), this protein is Peptide methionine sulfoxide reductase MsrA.